A 504-amino-acid chain; its full sequence is Glutamate--tRNA ligase (504 aa).

The short motif at 12-22 (PSPTGALHIGG) is the 'HIGH' region element. Residues 260–264 (KLSKR) carry the 'KMSKS' region motif. ATP is bound at residue K263.

Belongs to the class-I aminoacyl-tRNA synthetase family. Glutamate--tRNA ligase type 1 subfamily. In terms of assembly, monomer.

It localises to the cytoplasm. It catalyses the reaction tRNA(Glu) + L-glutamate + ATP = L-glutamyl-tRNA(Glu) + AMP + diphosphate. Its function is as follows. Catalyzes the attachment of glutamate to tRNA(Glu) in a two-step reaction: glutamate is first activated by ATP to form Glu-AMP and then transferred to the acceptor end of tRNA(Glu). The polypeptide is Glutamate--tRNA ligase (Bacteroides thetaiotaomicron (strain ATCC 29148 / DSM 2079 / JCM 5827 / CCUG 10774 / NCTC 10582 / VPI-5482 / E50)).